The primary structure comprises 518 residues: Protein nucleotidyltransferase YdiU (518 aa).

Basic and acidic residues predominate over residues 1–10; the sequence is MTHLQFDNRL. Positions 1–23 are disordered; the sequence is MTHLQFDNRLRAQLPGDPEQGPR. ATP contacts are provided by glycine 100, glycine 102, arginine 103, lysine 123, aspartate 135, glycine 136, arginine 193, and arginine 200. Aspartate 270 functions as the Proton acceptor in the catalytic mechanism. Residues asparagine 271 and aspartate 280 each contribute to the Mg(2+) site. An ATP-binding site is contributed by aspartate 280.

It belongs to the SELO family. It depends on Mg(2+) as a cofactor. Mn(2+) serves as cofactor.

The enzyme catalyses L-seryl-[protein] + ATP = 3-O-(5'-adenylyl)-L-seryl-[protein] + diphosphate. It carries out the reaction L-threonyl-[protein] + ATP = 3-O-(5'-adenylyl)-L-threonyl-[protein] + diphosphate. It catalyses the reaction L-tyrosyl-[protein] + ATP = O-(5'-adenylyl)-L-tyrosyl-[protein] + diphosphate. The catalysed reaction is L-histidyl-[protein] + UTP = N(tele)-(5'-uridylyl)-L-histidyl-[protein] + diphosphate. The enzyme catalyses L-seryl-[protein] + UTP = O-(5'-uridylyl)-L-seryl-[protein] + diphosphate. It carries out the reaction L-tyrosyl-[protein] + UTP = O-(5'-uridylyl)-L-tyrosyl-[protein] + diphosphate. In terms of biological role, nucleotidyltransferase involved in the post-translational modification of proteins. It can catalyze the addition of adenosine monophosphate (AMP) or uridine monophosphate (UMP) to a protein, resulting in modifications known as AMPylation and UMPylation. The protein is Protein nucleotidyltransferase YdiU of Xanthomonas campestris pv. campestris (strain B100).